A 734-amino-acid chain; its full sequence is Vacuolar transporter chaperone complex subunit 2 (734 aa).

The SPX domain maps to 1–144 (MRFSDSIEAG…PGYSLRPVFQ (144 aa)). The Cytoplasmic portion of the chain corresponds to 1–624 (MRFSDSIEAG…EAKVWLANER (624 aa)). The tract at residues 125 to 132 (KIVKKHDK) is important for inositol polyphosphate binding. At Ser-181 the chain carries Phosphoserine. Residue Thr-529 is modified to Phosphothreonine. Tyr-583 is subject to Phosphotyrosine. A helical transmembrane segment spans residues 625–645 (TFLKWLHVVVLLGSLALALYN). Over 646–650 (SAGER) the chain is Vacuolar. Residues 651–671 (LGQAFGVVYTLLAIFIGFYAW) form a helical membrane-spanning segment. The Cytoplasmic segment spans residues 672–693 (KLHAKRSQMIKSRSPAPMTDYW). Residues 694-714 (GPLIVGTALAISLIVNMSFAL) form a helical membrane-spanning segment. Over 715-734 (KDAVYQNLIEPDRLLVKLFT) the chain is Vacuolar.

This sequence belongs to the VTC2/3 family. In terms of assembly, the VTC core complex is an integral membrane heterooligomer composed of at least the catalytic subunit vtc4 and the accessory subunits vtc1 and vtc2. vtc1 is a small membrane protein without hydrophilic domain. Vtc2 and vtc4 are related and have 2 hydrophilic domains that face the cytosol, an N-terminal SPX domain and the central core domain. The central core in vtc4 is the catalytic domain.

Its subcellular location is the vacuole membrane. In terms of biological role, accessory subunit of the vacuolar transporter chaperone (VTC) complex. The VTC complex acts as a vacuolar polyphosphate polymerase that catalyzes the synthesis of inorganic polyphosphate (polyP) via transfer of phosphate from ATP to a growing polyP chain, releasing ADP. VTC exposes its catalytic domain vtc4 to the cytosol, where the growing polyP chain winds through a tunnel-shaped pocket, integrating cytoplasmic polymer synthesis with polyP membrane translocation. The VTC complex carries 9 vacuolar transmembrane domains, which are likely to constitute the translocation channel into the organelle lumen. PolyP synthesis is tightly coupled to its transport into the vacuole lumen, in order to avoid otherwise toxic intermediates in the cytosol, and it depends on the proton gradient across the membrane, formed by V-ATPase. The VTC complex also plays a role in vacuolar membrane fusion. The protein is Vacuolar transporter chaperone complex subunit 2 (vtc2) of Schizosaccharomyces pombe (strain 972 / ATCC 24843) (Fission yeast).